We begin with the raw amino-acid sequence, 530 residues long: Glucose-6-phosphate isomerase (530 aa).

The Proton donor role is filled by glutamate 322. Catalysis depends on residues histidine 351 and lysine 455.

It belongs to the GPI family.

The protein resides in the cytoplasm. The catalysed reaction is alpha-D-glucose 6-phosphate = beta-D-fructose 6-phosphate. It participates in carbohydrate biosynthesis; gluconeogenesis. Its pathway is carbohydrate degradation; glycolysis; D-glyceraldehyde 3-phosphate and glycerone phosphate from D-glucose: step 2/4. Functionally, catalyzes the reversible isomerization of glucose-6-phosphate to fructose-6-phosphate. This is Glucose-6-phosphate isomerase from Geobacter sp. (strain M21).